A 163-amino-acid chain; its full sequence is Photosystem II extrinsic protein V (163 aa).

A signal peptide spans 1-26 (MFRRLIGVVVATALLTFQLIVGSATA). Cys-63, Cys-66, His-67, and His-118 together coordinate heme c.

Belongs to the cytochrome c family. PsbV subfamily. PSII is composed of 1 copy each of membrane proteins PsbA, PsbB, PsbC, PsbD, PsbE, PsbF, PsbH, PsbI, PsbJ, PsbK, PsbL, PsbM, PsbT, PsbX, PsbY, PsbZ, Psb30/Ycf12, peripheral proteins PsbO, CyanoQ (PsbQ), PsbU, PsbV and a large number of cofactors. It forms dimeric complexes. Requires heme c as cofactor.

The protein localises to the cellular thylakoid membrane. In terms of biological role, one of the extrinsic, lumenal subunits of photosystem II (PSII). PSII is a light-driven water plastoquinone oxidoreductase, using light energy to abstract electrons from H(2)O, generating a proton gradient subsequently used for ATP formation. The extrinsic proteins stabilize the structure of photosystem II oxygen-evolving complex (OEC), the ion environment of oxygen evolution and protect the OEC against heat-induced inactivation. Low-potential cytochrome c that plays a role in the OEC of PSII. This is Photosystem II extrinsic protein V from Nostoc sp. (strain PCC 7120 / SAG 25.82 / UTEX 2576).